The sequence spans 2672 residues: MTAILNWEDISPVLEKGTRESHVSKRVPFLQDISQLVRQETLEKPQLSEIAFVLLNTFTIYEDNRSKSLVTSILLDILNLEPCLLENFIRFISDVVISNPATKAVADYLNLLDWINSFLIFVSHNSNLFEEYIPKLLVAHSYATFGVETILDNQEEGKKSQDKQNQHRKRIRYCIFQTTVKAFLKCLKDNDDSISFMKISIKTVLESYSKLKITSVGVVMIMGALTQAALQLLSRQPALHSVLKENSAEKYCEYLGKEVFLGKNPPSSFCLEIGLKPFLKEFVSQELFIKFFIPNIEKAVLRSPEVGFSILSELYAGVSPEKVNLLNAFASSKLINQYFSSFKSSKEVVRSVSLQSMIILLRKISNTDTTLEDLTKLIDEIFKNIKSNLNADYKSLISKILIEIPLTHYEVSEKICKGLSPYIGKEGNEAALTLMLNAFFVHYFSLGKPIEDLDKIISAGFADKKPALKKCWFAAFLNNSNAASEEVILNFIDGCLEFVKDSIIHYQTHGHACILASIEFTNKILALDNTELNDRVMQLIETLPENSSIGDAILTAALSTELSIENRIHAVNLLQELFYKKPEFIGFSVIDAIERRMRVQELIPQQNTSFKYVTSVLLAITSELPDKEASIKVLINALVIAQWNIFNIKNGWAGLVLRARLDPAEVVKEHASVIMEKILEITGSCEWIDTIYGACGLQAAAYAAFIQPNEFTPILCKTIEADLTADDFSRLSEEDFEIFAGEEGVLVVDVLEESMNKKLSNKNSKEYETLMWEQKIRKEQAKKNVKKLSKEEQELVNEQLAKESAVRSHVSEISTRLKRGIRLVSELSKAACLVQNGIATWFPLAVTKLLYLCSEPNISKLTEDVNNVFLQLSQNVSERLGNIRLFLGLATLRVHNANGISQDYLQEPLVELLTRVLFRIKFVSNQAAIDSISLTYILPLLINVLEKGKAIALKNADKPVVKAEFVEEDEEEEHLLLAMEIISVHAEAFEDPSIPRISIVEVLLSLLSLPSKAKIAKDCFNALCQSISVAPNQEDLDMILSNLLSPNQFVRSTILETLDNEFELEPFMKYSPEVFICRFDSDPSNREIADFIWEFNKFVVNDELLKSLFPLFNQDDSGLRLFAANAYAFGAVSLFTSEENSSKDYLNDLLNFYKEKAKPLEPILDQFGLVLVSASEQKDPWQGRSTVAITLKIMAKAFSAEDDTVVNIIKFLVDDGGLVDREPIVRQEMKEAGVELITLHGSQNSKDLIPIFEEALSSSTDSALKENVIILYGTLARHLQQSDARIHTIIERLLSTLDTPSADIQQAVSACIAPLVFQFKQKVGDYLGILMEKLLNPTVASSMRKGAAWGIAGLVKGYGISALSEFDIIRNLIEAAEDKKEPKRRESVGFCFQYLSESLGKFFEPYVIEILPNILKNLGDAVPEVRDATARATKAIMAHTTGYGVKKLIPVAVSNLDEIAWRTKRGSVQLLGNMAYLDPTQLSASLSTIVPEIVGVLNDSHKEVRKAADESLKRFGEVIRNPEIQKLVPVLLQAIGDPTKYTEEALDSLIQTQFVHYIDGPSLALIIHIIHRGMHDRSANIKRKACKIVGNMAILVDTKDLIPYLQQLIDEVEIAMVDPVPNTRATAARALGALVERLGEEQFPDLIPRLLDTLSDESKSGDRLGSAQALAEVISGLGLTKLDEMLPTILAGVTNFRAYIREGFMPLLLFLPVCFGSQFAPYINQIIQPILSGLADNDENIRDTALKAGKLIVKNYATKAVDLLLPELERGMFDENDRIRLSSVQLTGELLFQVTGISSRNEFSEEDGDHNGEFSGKLVDVLGQDRRDRILAALFVCRNDTSGIVRATTVDIWKALVPNTPRAVKEILPTLTGMIVTHLASSSNVLRNIAAQTLGDLVRRVGGNALSQLLPSLEESLIETSNSDSRQGVCIALYELIESASTETISQFQSTIVNIIRTALIDESATVREAAALSFDVFQDVVGKTAVDEVLPYLLHMLESSDNSDFALLGLQEIMSKKSDVIFPILIPTLLAPPIDAFRASALGSLAEVAGSALYKRLSIIINALVDAIIGTSEDESTKGALELALDRVFLSVNDDEGLHPLLQQIMSLLKSDNIEKRIAVLERLPNFFDKTVLDFDVYIPNFVSHAILSLDDEDQRVVNGNFNALSTLLKKVDKPTLEKLVKPAKQSLALTGRQGQDVAAFKLPRGPNCVLPIFLHGLMYGSNDEREESALAIADVVSKTPAANLKPFVSVITGPLIRVVGERFSSDIKAAILFALNVLFIKIPMFLRPFIPQLQRTFVKSLSDATNETLRLRAAKALGALIEHQPRVDPLVIELVTGAKQATDEGVKTAMLKALLEVIMKAGSKLNENSKTNIVNLVEEEMLGSNDKLAVAYAKLIGSLSEILSNDEAHKILQDKVLNADLDGETGKFAILTLNSFLKDAPTHIFNTGLIDEFVSYILNAIRSPDVYFGENGTIAAGKLLLLEGEKRSPFVKKDAAEPFKIGDENINLLINELSKAVLQPASNSTDVRRLALVVIRTLARFKFDECIKQYFDVVGPSVFSCLRDPVIPIKLAAEKAYLALFKLVEEDDMHTFNEWFAKISDRGNSIETVTGTTIQLRSVGDYTKRVGKRLANVERERIAAGGDAETMFSDRFEDEREIWAVGGVELTTDI.

HEAT repeat units follow at residues 5 to 42, 79 to 117, 174 to 211, 227 to 267, 329 to 366, 372 to 410, 509 to 549, 611 to 648, 706 to 745, 902 to 932, and 933 to 970; these read LNWE…QETL, NLEP…WINS, CIFQ…YSKL, QAAL…NPPS, FASS…KISN, EDLT…THYE, HGHA…NSSI, KYVT…IFNI, IQPN…EEGV, QDYL…IDSI, and SLTY…EEDE. One copy of the HEAT 12; degenerate repeat lies at 975–994; that stretch reads LLLAMEIISVHAEAFEDPSI. The HEAT 13; degenerate repeat unit spans residues 995–1030; the sequence is PRISIVEVLLSLLSLPSKAKIAKDCFNALCQSISVA. HEAT repeat units lie at residues 1031–1067, 1099–1138, 1185–1224, 1243–1281, 1284–1321, 1363–1401, 1405–1442, 1444–1480, 1484–1521, 1523–1559, 1561–1598, 1603–1640, 1641–1679, 1681–1717, 1721–1758, 1760–1796, 1825–1862, 1863–1903, 1905–1942, 1947–1984, 1985–2024, 2026–2055, 2057–2095, 2097–2134, 2138–2175, 2206–2243, 2250–2286, 2290–2328, 2347–2384, 2392–2429, 2450–2487, and 2506–2546; these read PNQE…LEPF, VVND…FTSE, STVA…REPI, QNSK…HLQQ, ARIH…QFKQ, LSEF…SLGK, PYVI…HTTG, GVKK…LDPT, ASLS…VIRN, EIQK…HYID, PSLA…LVDT, PYLQ…RLGE, EQFP…GLGL, KLDE…CFGS, PYIN…NYAT, AVDL…QVTG, DRRD…NTPR, AVKE…RVGG, ALSQ…SAST, QFQS…VVGK, TAVD…VIFP, LIPT…SALY, RLSI…SVND, EGLH…KTVL, VYIP…KVDK, RGPN…KTPA, VSVI…KIPM, PFIP…HQPR, GVKT…EEML, VAYA…ETGK, GLID…LEGE, and ENIN…FKFD. The tract at residues 1330–1641 is EF3-like region; it reads LMEKLLNPTV…GALVERLGEE (312 aa). Residues 2207–2356 form an RWDBD region region; it reads GPNCVLPIFL…GVKTAMLKAL (150 aa).

The protein belongs to the GCN1 family. Interacts (via N- and C-terminus) with GCN2 (via N-terminal RWD domain); this interaction stimulates GCN2 kinase activity in a GCN20-dependent manner in response to amino acid starvation. Interacts (via C-terminus) with GCN20 (via N-terminus); this interaction stimulates GCN2 kinase activity in response to amino acid starvation. The GCN1-GCN20 complex interacts with GCN2 on translating ribosomes in amino acid-starved cells; GCN1 may bind near the ribosomal A-site and promotes the transfer of uncharged tRNAs from the A-site to the tRNA-binding domain in GCN2 for its subsequent kinase activation, and hence allowing GCN4 translational activation and derepression of amino acid biosynthetic genes. Interacts (via C-terminus) with YIH1 (via N-terminus); this interaction reduces the GCN1-GCN20 complex formation and prevents the interaction of GCN1 with GCN2 and GCN2 kinase activation in amino acid-starved cells. Interacts with GIR2; this interaction prevents the interaction of GCN1 with GCN2 and GCN2 kinase activation in amino acid-starved cells. Interacts (via middle region) with RPS10A and RPS10B; these interactions are direct and promote GCN2 kinase activation. Associates (via N-terminus) with ribosomes; this association is stimulated in a ATP- and GCN20-dependent manner and is necessary to activate GCN2 kinase activity.

Its subcellular location is the cytoplasm. Ribosome collision sensor that activates a translation quality control pathway when a ribosome has stalled during translation. Directly binds to the ribosome and acts as a sentinel for colliding ribosomes. GCN1 also acts as a positive activator of the integrated stress response (ISR) by mediating activation of GCN2 in response to low amino acid, carbon, or purine availability. Component of the GCN1-GCN20 complex that forms a complex with GCN2 on translating ribosomes: during this process, GCN1 acts as a chaperone to facilitate delivery of uncharged tRNAs that enter the A-site of ribosomes to the tRNA-binding domain of GCN2, and hence stimulating GCN2 kinase activity, leading to phosphorylation of eukaryotic translation initiation factor 2 (eIF-2-alpha/SUI2). eIF-2-alpha/SUI2 phosphorylation converts eIF-2-alpha/SUI2 into a global protein synthesis inhibitor, leading to a global attenuation of cap-dependent translation, and thus to a reduced overall utilization of amino acids, while concomitantly initiating the preferential translation of ISR-specific mRNAs, such as the transcriptional activator GCN4, and hence allowing GCN4-mediated reprogramming of amino acid biosynthetic gene expression to alleviate nutrient depletion. In Saccharomyces cerevisiae (strain ATCC 204508 / S288c) (Baker's yeast), this protein is eIF-2-alpha kinase activator GCN1.